A 460-amino-acid chain; its full sequence is Bifunctional protein GlmU (460 aa).

The segment at 1–237 is pyrophosphorylase; it reads MSSNQYTAGA…DPDLLGVNTP (237 aa). UDP-N-acetyl-alpha-D-glucosamine-binding positions include 13–16, K27, Q78, and 83–84; these read LAAG and GT. D109 serves as a coordination point for Mg(2+). The UDP-N-acetyl-alpha-D-glucosamine site is built by G146, E160, N177, and N235. Residue N235 participates in Mg(2+) binding. Residues 238-258 form a linker region; the sequence is AELMRSEELLRENIVTRHLHN. Residues 259-460 form an N-acetyltransferase region; sequence GVHVHAAGSV…QKNLRKTRHS (202 aa). Residues R341 and K359 each contribute to the UDP-N-acetyl-alpha-D-glucosamine site. Residue H371 is the Proton acceptor of the active site. Residues Y374 and N385 each coordinate UDP-N-acetyl-alpha-D-glucosamine. Acetyl-CoA-binding positions include A388, 394–395, S413, A431, and R448; that span reads NY.

In the N-terminal section; belongs to the N-acetylglucosamine-1-phosphate uridyltransferase family. The protein in the C-terminal section; belongs to the transferase hexapeptide repeat family. As to quaternary structure, homotrimer. Mg(2+) serves as cofactor.

Its subcellular location is the cytoplasm. The enzyme catalyses alpha-D-glucosamine 1-phosphate + acetyl-CoA = N-acetyl-alpha-D-glucosamine 1-phosphate + CoA + H(+). The catalysed reaction is N-acetyl-alpha-D-glucosamine 1-phosphate + UTP + H(+) = UDP-N-acetyl-alpha-D-glucosamine + diphosphate. Its pathway is nucleotide-sugar biosynthesis; UDP-N-acetyl-alpha-D-glucosamine biosynthesis; N-acetyl-alpha-D-glucosamine 1-phosphate from alpha-D-glucosamine 6-phosphate (route II): step 2/2. The protein operates within nucleotide-sugar biosynthesis; UDP-N-acetyl-alpha-D-glucosamine biosynthesis; UDP-N-acetyl-alpha-D-glucosamine from N-acetyl-alpha-D-glucosamine 1-phosphate: step 1/1. It participates in bacterial outer membrane biogenesis; LPS lipid A biosynthesis. In terms of biological role, catalyzes the last two sequential reactions in the de novo biosynthetic pathway for UDP-N-acetylglucosamine (UDP-GlcNAc). The C-terminal domain catalyzes the transfer of acetyl group from acetyl coenzyme A to glucosamine-1-phosphate (GlcN-1-P) to produce N-acetylglucosamine-1-phosphate (GlcNAc-1-P), which is converted into UDP-GlcNAc by the transfer of uridine 5-monophosphate (from uridine 5-triphosphate), a reaction catalyzed by the N-terminal domain. In Oleidesulfovibrio alaskensis (strain ATCC BAA-1058 / DSM 17464 / G20) (Desulfovibrio alaskensis), this protein is Bifunctional protein GlmU.